A 1285-amino-acid chain; its full sequence is Nuclear pore complex protein NUP133 (1285 aa).

2 disordered regions span residues 1–53 (MFSP…PAPW) and 522–580 (EPPE…QTAR). Residues 31 to 41 (TPATQNRNNFI) are compositionally biased toward polar residues. Basic and acidic residues-rich tracts occupy residues 523–544 (PPER…DETR) and 553–569 (TAGR…DKGN).

This sequence belongs to the nucleoporin Nup133 family. Part of the nuclear pore complex (NPC). The NPC has an eight-fold symmetrical structure comprising a central transport channel and two rings, the cytoplasmic and nuclear rings, to which eight filaments are attached. The cytoplasmic filaments have loose ends, while the nuclear filaments are joined in a distal ring, forming a nuclear basket. NPCs are highly dynamic in configuration and composition, and can be devided in 3 subcomplexes, the NUP62 subcomplex, the NUP107-160 subcomplex and the NUP93 subcomplex, containing approximately 30 different nucleoporin proteins.

The protein resides in the nucleus envelope. It localises to the nucleus. Its subcellular location is the nuclear pore complex. The sequence is that of Nuclear pore complex protein NUP133 from Arabidopsis thaliana (Mouse-ear cress).